Reading from the N-terminus, the 376-residue chain is MEPSFAPYAAHSSQTRGRVHREAPAAPRSEFQRDRDRIIHSTAFRRLEYKTQVFVNHEGDLFRTRLTHSIEVAQIGRTIARLLNLNEDLVEAVALAHDLGHTPFGHAGQDALNACMREHGGFEHNLQSLRVVDLLEERYAEFDGLNLTFEAREGILKHCALSNAEKLGEVGRRFIDKKQPSLEAQVANLADEIAYNNHDVDDGLRSGLITLEQLSEVTIFGRHLAEVRRKHPTLQGRRVVTETVRRIINALILDLVDTTRTNVVNSGVETLDDVRNAPPLAAFSPAILEQHRELKRFLLHHLYRHYKVARMSTKAGRIISDLYAAFTGDARLLPPEHQARESLEGTRAVADYIAGMTDRYAMREHRRIYAVEEIYD.

The disordered stretch occupies residues 1-32 (MEPSFAPYAAHSSQTRGRVHREAPAAPRSEFQ). The HD domain occupies 65-196 (RLTHSIEVAQ…ANLADEIAYN (132 aa)).

The protein belongs to the dGTPase family. Type 2 subfamily.

The sequence is that of Deoxyguanosinetriphosphate triphosphohydrolase-like protein from Thiobacillus denitrificans (strain ATCC 25259 / T1).